A 159-amino-acid chain; its full sequence is Endoribonuclease YbeY (159 aa).

Zn(2+)-binding residues include H114, H118, and H124.

This sequence belongs to the endoribonuclease YbeY family. It depends on Zn(2+) as a cofactor.

Its subcellular location is the cytoplasm. Its function is as follows. Single strand-specific metallo-endoribonuclease involved in late-stage 70S ribosome quality control and in maturation of the 3' terminus of the 16S rRNA. The polypeptide is Endoribonuclease YbeY (Pectobacterium carotovorum subsp. carotovorum (strain PC1)).